We begin with the raw amino-acid sequence, 485 residues long: ATP synthase subunit beta (485 aa).

A disordered region spans residues 1–20 (MSTTKTTKMTVKTGSKGTSG). 170–177 (GGAGVGKT) is an ATP binding site.

Belongs to the ATPase alpha/beta chains family. As to quaternary structure, F-type ATPases have 2 components, CF(1) - the catalytic core - and CF(0) - the membrane proton channel. CF(1) has five subunits: alpha(3), beta(3), gamma(1), delta(1), epsilon(1). CF(0) has three main subunits: a(1), b(2) and c(9-12). The alpha and beta chains form an alternating ring which encloses part of the gamma chain. CF(1) is attached to CF(0) by a central stalk formed by the gamma and epsilon chains, while a peripheral stalk is formed by the delta and b chains.

The protein localises to the cell membrane. The catalysed reaction is ATP + H2O + 4 H(+)(in) = ADP + phosphate + 5 H(+)(out). Produces ATP from ADP in the presence of a proton gradient across the membrane. The catalytic sites are hosted primarily by the beta subunits. The chain is ATP synthase subunit beta from Mycobacterium leprae (strain TN).